Here is a 195-residue protein sequence, read N- to C-terminus: ATP-dependent Clp protease proteolytic subunit (195 aa).

Serine 98 functions as the Nucleophile in the catalytic mechanism. The active site involves histidine 123.

This sequence belongs to the peptidase S14 family. In terms of assembly, fourteen ClpP subunits assemble into 2 heptameric rings which stack back to back to give a disk-like structure with a central cavity, resembling the structure of eukaryotic proteasomes.

It localises to the cytoplasm. It carries out the reaction Hydrolysis of proteins to small peptides in the presence of ATP and magnesium. alpha-casein is the usual test substrate. In the absence of ATP, only oligopeptides shorter than five residues are hydrolyzed (such as succinyl-Leu-Tyr-|-NHMec, and Leu-Tyr-Leu-|-Tyr-Trp, in which cleavage of the -Tyr-|-Leu- and -Tyr-|-Trp bonds also occurs).. Functionally, cleaves peptides in various proteins in a process that requires ATP hydrolysis. Has a chymotrypsin-like activity. Plays a major role in the degradation of misfolded proteins. The chain is ATP-dependent Clp protease proteolytic subunit from Thermoanaerobacter pseudethanolicus (strain ATCC 33223 / 39E) (Clostridium thermohydrosulfuricum).